We begin with the raw amino-acid sequence, 574 residues long: Cytochrome P450 4g15 (574 aa).

Residues 288–327 (REREQNGGVDQTPSTAGSDEKDREKDKEKASPVAGLSYGQ) are disordered. Residues 295 to 304 (GVDQTPSTAG) are compositionally biased toward polar residues. Residues 305–317 (SDEKDREKDKEKA) are compositionally biased toward basic and acidic residues. Residues Glu-379 and Cys-519 each contribute to the heme site.

Belongs to the cytochrome P450 family. The cofactor is heme. As to expression, expressed in larval brain cortex cells and ring glands and weakly in larval digestive system and adult nervous system.

It localises to the endoplasmic reticulum membrane. It is found in the microsome membrane. Its function is as follows. Probably involved in steroid hormones biosynthesis. The polypeptide is Cytochrome P450 4g15 (Cyp4g15) (Drosophila melanogaster (Fruit fly)).